A 74-amino-acid polypeptide reads, in one-letter code: Capsid protein VP2 (74 aa).

The protein resides in the virion. Its function is as follows. This extremely basic protein may tightly bind to SSV1 DNA. Essential for virus function. In Saccharolobus solfataricus (Sulfolobus solfataricus), this protein is Capsid protein VP2 (VP2).